The sequence spans 327 residues: Pyruvate dehydrogenase E1 component subunit beta (327 aa).

A thiamine diphosphate-binding site is contributed by Glu63.

Heterodimer of an alpha and a beta chain. The cofactor is thiamine diphosphate.

It catalyses the reaction N(6)-[(R)-lipoyl]-L-lysyl-[protein] + pyruvate + H(+) = N(6)-[(R)-S(8)-acetyldihydrolipoyl]-L-lysyl-[protein] + CO2. The pyruvate dehydrogenase complex catalyzes the overall conversion of pyruvate to acetyl-CoA and CO(2). It contains multiple copies of three enzymatic components: pyruvate dehydrogenase (E1), dihydrolipoamide acetyltransferase (E2) and lipoamide dehydrogenase (E3). This chain is Pyruvate dehydrogenase E1 component subunit beta (pdhB), found in Mycoplasma pneumoniae (strain ATCC 29342 / M129 / Subtype 1) (Mycoplasmoides pneumoniae).